A 57-amino-acid chain; its full sequence is Potassium channel toxin KTx1 (57 aa).

The signal sequence occupies residues 1 to 13 (FLVLLLVSLMCYA). A propeptide spanning residues 14–18 (EIAEG) is cleaved from the precursor. Disulfide bonds link cysteine 24–cysteine 37, cysteine 30–cysteine 42, and cysteine 36–cysteine 51.

It belongs to the scorpion calcin-like family. KTX subfamily. As to expression, expressed by the venom gland.

Its subcellular location is the secreted. Functionally, this recombinant peptide inhibits voltage-gated potassium channels mKv1.3/KCNA3 (IC(50)=1.70 uM), mKv1.1/KCNA1 (10 uM inhibits 40% of currents) and hKv1.2/KCNA2 (10 uM inhibits 42% of currents). May also increase intracellular calcium release through the activation of nuclear inositol 1,4,5-trisphosphate receptors (ITPR) of cardiomyocytes, thereby causing an increase in the contraction frequency of these cells. The protein is Potassium channel toxin KTx1 of Isometrus maculatus (Lesser brown scorpion).